We begin with the raw amino-acid sequence, 407 residues long: Na(+)-translocating NADH-quinone reductase subunit F (407 aa).

The chain crosses the membrane as a helical span at residues 6–26; sequence IFLAIGMFTAIVLGLVAIILV. Residues 35–127 enclose the 2Fe-2S ferredoxin-type domain; the sequence is GDVTIQINGE…DMQIRVPEEV (93 aa). 4 residues coordinate [2Fe-2S] cluster: Cys-70, Cys-76, Cys-79, and Cys-111. Residues 130 to 269 form the FAD-binding FR-type domain; the sequence is VKKWECTVES…YGPFGEFFAK (140 aa). Residues 272–389 are catalytic; it reads EAEMVFIGGG…PMMNAAVIKM (118 aa).

The protein belongs to the NqrF family. Composed of six subunits; NqrA, NqrB, NqrC, NqrD, NqrE and NqrF. Requires [2Fe-2S] cluster as cofactor. The cofactor is FAD.

It is found in the cell inner membrane. It catalyses the reaction a ubiquinone + n Na(+)(in) + NADH + H(+) = a ubiquinol + n Na(+)(out) + NAD(+). Functionally, NQR complex catalyzes the reduction of ubiquinone-1 to ubiquinol by two successive reactions, coupled with the transport of Na(+) ions from the cytoplasm to the periplasm. The first step is catalyzed by NqrF, which accepts electrons from NADH and reduces ubiquinone-1 to ubisemiquinone by a one-electron transfer pathway. The sequence is that of Na(+)-translocating NADH-quinone reductase subunit F from Pseudomonas aeruginosa (strain ATCC 15692 / DSM 22644 / CIP 104116 / JCM 14847 / LMG 12228 / 1C / PRS 101 / PAO1).